We begin with the raw amino-acid sequence, 512 residues long: Ribose import ATP-binding protein RbsA (512 aa).

ABC transporter domains are found at residues 6 to 242 (LELR…VNRE) and 252 to 496 (VPAG…TGAQ). 38–45 (GENGAGKS) provides a ligand contact to ATP.

It belongs to the ABC transporter superfamily. Ribose importer (TC 3.A.1.2.1) family. As to quaternary structure, the complex is composed of an ATP-binding protein (RbsA), two transmembrane proteins (RbsC) and a solute-binding protein (RbsB).

Its subcellular location is the cell inner membrane. The catalysed reaction is D-ribose(out) + ATP + H2O = D-ribose(in) + ADP + phosphate + H(+). Part of the ABC transporter complex RbsABC involved in ribose import. Responsible for energy coupling to the transport system. This Pseudomonas putida (strain ATCC 47054 / DSM 6125 / CFBP 8728 / NCIMB 11950 / KT2440) protein is Ribose import ATP-binding protein RbsA.